The chain runs to 134 residues: DNA-binding protein inhibitor ID-2 (134 aa).

A phosphoserine mark is found at S14 and S25. Residues 23-75 (SRSKTPVDDPMSLLYNMNDCYSKLKELVPSIPQNKKVTKMEILQHVIDYILDL) form the bHLH domain. The segment at 30–83 (DDPMSLLYNMNDCYSKLKELVPSIPQNKKVTKMEILQHVIDYILDLQIALDSHP) is interaction with IFI204. Positions 106–115 (LNTDISILSL) match the Nuclear export signal motif.

As to quaternary structure, interacts with GATA4 and NKX2-5. Interacts with NR0B2. Interacts with CLOCK and BMAL1. Interacts with IFI204. Interacts with NEDD9/HEF1. Interacts with ASB4; this interaction promotes ID2 proteasomal degradation. In terms of processing, polyubiquitinated; which is favored by Ifi204 and leads to proteasomal degradation. Ubiquitinated in a ASB4-depedent manner, leading to proteasomal degradation. Phosphorylated in vitro by CDK1, PKA and PKC.

The protein localises to the cytoplasm. Its subcellular location is the nucleus. Its function is as follows. Transcriptional regulator (lacking a basic DNA binding domain) which negatively regulates the basic helix-loop-helix (bHLH) transcription factors by forming heterodimers and inhibiting their DNA binding and transcriptional activity. Implicated in regulating a variety of cellular processes, including cellular growth, senescence, differentiation, apoptosis, angiogenesis, and neoplastic transformation. Inhibits skeletal muscle and cardiac myocyte differentiation. Regulates the circadian clock by repressing the transcriptional activator activity of the CLOCK-BMAL1 heterodimer. Restricts the CLOCK and BMAL1 localization to the cytoplasm. Plays a role in both the input and output pathways of the circadian clock: in the input component, is involved in modulating the magnitude of photic entrainment and in the output component, contributes to the regulation of a variety of liver clock-controlled genes involved in lipid metabolism. This chain is DNA-binding protein inhibitor ID-2 (Id2), found in Mus musculus (Mouse).